Here is a 205-residue protein sequence, read N- to C-terminus: MSAIAPGMILFAYLCGSISSAILVCRIAGLPDPRQSGSGNPGATNVLRIGGKGAAVAVLIFDVLKGMLPVWGAYALGVTPFWLGLIAIAACLGHIWPVFFGFKGGKGVATAFGAIAPIGWDLTGVMAGTWLLTVLLSGYSSLGAIVSALIAPFYVWWFKPQFTFPVSMLSCLILLRHHDNIQRLWRRQETKIWTKLKKKREKDPQ.

A run of 5 helical transmembrane segments spans residues 4–24, 56–76, 81–101, 112–132, and 138–158; these read IAPG…AILV, VAVL…AYAL, FWLG…VFFG, FGAI…TWLL, and GYSS…VWWF.

This sequence belongs to the PlsY family. As to quaternary structure, probably interacts with PlsX.

The protein resides in the cell inner membrane. It carries out the reaction an acyl phosphate + sn-glycerol 3-phosphate = a 1-acyl-sn-glycero-3-phosphate + phosphate. The protein operates within lipid metabolism; phospholipid metabolism. Catalyzes the transfer of an acyl group from acyl-phosphate (acyl-PO(4)) to glycerol-3-phosphate (G3P) to form lysophosphatidic acid (LPA). This enzyme utilizes acyl-phosphate as fatty acyl donor, but not acyl-CoA or acyl-ACP. In Citrobacter koseri (strain ATCC BAA-895 / CDC 4225-83 / SGSC4696), this protein is Glycerol-3-phosphate acyltransferase.